We begin with the raw amino-acid sequence, 338 residues long: Glycerol-3-phosphate dehydrogenase [NAD(P)+] (338 aa).

NADPH is bound by residues serine 13, tryptophan 14, and lysine 108. Residues lysine 108, glycine 139, and serine 141 each contribute to the sn-glycerol 3-phosphate site. Residue alanine 143 participates in NADPH binding. The sn-glycerol 3-phosphate site is built by lysine 194, aspartate 247, serine 257, arginine 258, and asparagine 259. Lysine 194 serves as the catalytic Proton acceptor. Residue arginine 258 coordinates NADPH. NADPH is bound by residues valine 282 and glutamate 284.

The protein belongs to the NAD-dependent glycerol-3-phosphate dehydrogenase family.

The protein localises to the cytoplasm. The catalysed reaction is sn-glycerol 3-phosphate + NAD(+) = dihydroxyacetone phosphate + NADH + H(+). It catalyses the reaction sn-glycerol 3-phosphate + NADP(+) = dihydroxyacetone phosphate + NADPH + H(+). It functions in the pathway membrane lipid metabolism; glycerophospholipid metabolism. Catalyzes the reduction of the glycolytic intermediate dihydroxyacetone phosphate (DHAP) to sn-glycerol 3-phosphate (G3P), the key precursor for phospholipid synthesis. This is Glycerol-3-phosphate dehydrogenase [NAD(P)+] from Streptococcus pneumoniae (strain P1031).